A 244-amino-acid chain; its full sequence is 1-(5-phosphoribosyl)-5-[(5-phosphoribosylamino)methylideneamino] imidazole-4-carboxamide isomerase (244 aa).

Asp-11 acts as the Proton acceptor in catalysis. The active-site Proton donor is the Asp-132.

This sequence belongs to the HisA/HisF family.

The protein localises to the cytoplasm. It catalyses the reaction 1-(5-phospho-beta-D-ribosyl)-5-[(5-phospho-beta-D-ribosylamino)methylideneamino]imidazole-4-carboxamide = 5-[(5-phospho-1-deoxy-D-ribulos-1-ylimino)methylamino]-1-(5-phospho-beta-D-ribosyl)imidazole-4-carboxamide. It participates in amino-acid biosynthesis; L-histidine biosynthesis; L-histidine from 5-phospho-alpha-D-ribose 1-diphosphate: step 4/9. In Sphingopyxis alaskensis (strain DSM 13593 / LMG 18877 / RB2256) (Sphingomonas alaskensis), this protein is 1-(5-phosphoribosyl)-5-[(5-phosphoribosylamino)methylideneamino] imidazole-4-carboxamide isomerase.